Reading from the N-terminus, the 91-residue chain is UPF0213 protein NMA2126 (91 aa).

In terms of domain architecture, GIY-YIG spans 4–83; it reads SNWSLYLILC…AAQKRKLWEQ (80 aa).

This sequence belongs to the UPF0213 family.

The protein is UPF0213 protein NMA2126 of Neisseria meningitidis serogroup A / serotype 4A (strain DSM 15465 / Z2491).